The primary structure comprises 974 residues: MAGKARVHELAKELGVTSKELLATLKEQGEFVKSASSTVEAPVARRLRESFPSAKSADSAARPAAKPGAPAPSTPATSAKPGGPRPGPKPAAPAPAAPAAAAPAATPAAQAPAPAAPAASTATPAAPASNAPKPGRPTPAAPAPAAPAAPAAPAAASTPAAPSTGAKPGGPRPGPKPPRVGNNPYSSAPAERPAPRPAPGAPRPGAPRPAPGQGGPRPAPGQGGPRPAPGQGGPRPAPGQGGPRPAPGQGGPRPSPGSMPPRPNPGAMPARSARPAPGGRPGRPGGAPGGRPGGGGGGYRGGGAPGAGAGAPGGGAPAGGFRGRPGGGGRPGQRGAAAGAFGRPGGAPRRGRKSKRQKRQEYDSMQAPAVGGVRLPRGNGETIRLARGASLSDFAEKIDANPAALVQALFNLGEMVTATQSVNDETLELLGGEMNYVVQVVSPEDEDRELLDSFDLTYGEDEGGEEDLESRPPVVTVMGHVDHGKTRLLDTIRKANVREGEAGGITQHIGAYQVLTELDGNERLVTFIDTPGHEAFTAMRARGAKATDLAILVVAADDGVMPQTVEAINHAQAADVPIVVAVNKIDKEGANPDKIRQQLTEYGLVAEEYGGDTMFVDISAKQGTNIDALLEAVLLTADAALDLRANPDMDAQGVAIEAHLDRGRGPVATVLIQRGTLRVGDSIVAGDAYGRVRRMVDEHGDDVLEAMPSRPVQVVGFTSVPGAGDNLLVVDEDRIARQIADRRNARKRNALAAKSRKRISLEDLDSALKETSQLNLILKGDNSGTVEALEEALHGIEIDDEVQLRVIDRGVGGVTETNVNLAAASNAIIIGFNVRAEGKATELANREGVDIRYYSVIYQAIDEVEKALKGMLKPIYEEVELGKAEIRAMFRSSKVGNIAGCLVTSGTIRRNAKARLLRDNTVVAETVTISSLKREKEDAVEVREGYECGLTLTYSDIKVGDVIEAYELREKPRD.

Residues 31–376 are disordered; it reads FVKSASSTVE…APAVGGVRLP (346 aa). Residues 52 to 68 are compositionally biased toward low complexity; sequence PSAKSADSAARPAAKPG. The segment covering 83–96 has biased composition (pro residues); sequence GPRPGPKPAAPAPA. Residues 97–133 show a composition bias toward low complexity; that stretch reads APAAAAPAATPAAQAPAPAAPAASTATPAAPASNAPK. Over residues 134-147 the composition is skewed to pro residues; that stretch reads PGRPTPAAPAPAAP. Low complexity-rich tracts occupy residues 148-166 and 179-191; these read AAPA…STGA and RVGN…APAE. 2 stretches are compositionally biased toward pro residues: residues 195–210 and 253–266; these read PRPA…PRPA and RPSP…PNPG. Low complexity predominate over residues 267–277; it reads AMPARSARPAP. The segment covering 279–332 has biased composition (gly residues); sequence GRPGRPGGAPGGRPGGGGGGYRGGGAPGAGAGAPGGGAPAGGFRGRPGGGGRPG. Basic residues predominate over residues 349-358; that stretch reads RRGRKSKRQK. Residues 470–641 form the tr-type G domain; that stretch reads SRPPVVTVMG…AVLLTADAAL (172 aa). Positions 479 to 486 are G1; sequence GHVDHGKT. 479–486 is a binding site for GTP; it reads GHVDHGKT. Residues 504 to 508 are G2; it reads GITQH. Positions 529–532 are G3; sequence DTPG. Residues 529-533 and 583-586 each bind GTP; these read DTPGH and NKID. The interval 583–586 is G4; sequence NKID. The segment at 619 to 621 is G5; sequence SAK.

The protein belongs to the TRAFAC class translation factor GTPase superfamily. Classic translation factor GTPase family. IF-2 subfamily.

It is found in the cytoplasm. In terms of biological role, one of the essential components for the initiation of protein synthesis. Protects formylmethionyl-tRNA from spontaneous hydrolysis and promotes its binding to the 30S ribosomal subunits. Also involved in the hydrolysis of GTP during the formation of the 70S ribosomal complex. The polypeptide is Translation initiation factor IF-2 (Rhodococcus opacus (strain B4)).